We begin with the raw amino-acid sequence, 435 residues long: Homoserine dehydrogenase (435 aa).

Positions 13, 14, and 104 each coordinate NADPH. V14 is a binding site for NAD(+). NADP(+)-binding residues include V14 and K104. Positions 128, 131, 133, and 135 each coordinate Na(+). Residues G186 and E189 each coordinate NADP(+). Positions 189 and 200 each coordinate L-homoserine. The Proton donor role is filled by K204. G301 provides a ligand contact to NADPH. G301 is a binding site for NAD(+). Residue G301 participates in NADP(+) binding. The 76-residue stretch at 354–429 folds into the ACT domain; the sequence is YLRVQAKDEP…CVEKPITMIR (76 aa).

It belongs to the homoserine dehydrogenase family. In terms of assembly, homotetramer. Requires a metal cation as cofactor.

The enzyme catalyses L-homoserine + NAD(+) = L-aspartate 4-semialdehyde + NADH + H(+). The protein operates within amino-acid biosynthesis; L-methionine biosynthesis via de novo pathway; L-homoserine from L-aspartate: step 3/3. Its pathway is amino-acid biosynthesis; L-threonine biosynthesis; L-threonine from L-aspartate: step 3/5. Its activity is regulated as follows. Neither NaCl nor KCl increase the activity. L-threonine and L-serine do not markedly inhibit the oxidation activity. Catalyzes the conversion of L-aspartate-beta-semialdehyde (L-Asa) to L-homoserine (L-Hse), the third step in the biosynthesis of threonine and methionine from aspartate. Is highly specific for NAD(+), and displays an approximate 479-fold (kcat/Km) preference for NAD(+) over NADP(+). In Neisseria gonorrhoeae (strain ATCC 700825 / FA 1090), this protein is Homoserine dehydrogenase.